Here is a 319-residue protein sequence, read N- to C-terminus: Lipooligosaccharide heptosyltransferase 2 (319 aa).

The protein belongs to the glycosyltransferase 9 family.

It carries out the reaction an L-alpha-D-Hep-(1-&gt;5)-[alpha-Kdo-(2-&gt;4)]-alpha-Kdo-(2-&gt;6)-lipid A + ADP-L-glycero-beta-D-manno-heptose = an L-alpha-D-Hep-(1-&gt;3)-L-alpha-D-Hep-(1-&gt;5)-[alpha-Kdo-(2-&gt;4)]-alpha-Kdo-(2-&gt;6)-lipid A + ADP + H(+). It functions in the pathway bacterial outer membrane biogenesis; LOS core biosynthesis. Functionally, glycosyltransferase involved in the biosynthesis of the core oligosaccharide region of lipooligosaccharide (LOS). Catalyzes the addition of the second heptose unit to the heptosyl-Kdo2-lipid A module. In Campylobacter jejuni subsp. jejuni serotype O:2 (strain ATCC 700819 / NCTC 11168), this protein is Lipooligosaccharide heptosyltransferase 2.